Here is a 351-residue protein sequence, read N- to C-terminus: Nicotinate-nucleotide--dimethylbenzimidazole phosphoribosyltransferase (351 aa).

E317 serves as the catalytic Proton acceptor.

It belongs to the CobT family.

It catalyses the reaction 5,6-dimethylbenzimidazole + nicotinate beta-D-ribonucleotide = alpha-ribazole 5'-phosphate + nicotinate + H(+). The protein operates within nucleoside biosynthesis; alpha-ribazole biosynthesis; alpha-ribazole from 5,6-dimethylbenzimidazole: step 1/2. Catalyzes the synthesis of alpha-ribazole-5'-phosphate from nicotinate mononucleotide (NAMN) and 5,6-dimethylbenzimidazole (DMB). The chain is Nicotinate-nucleotide--dimethylbenzimidazole phosphoribosyltransferase from Ectopseudomonas mendocina (strain ymp) (Pseudomonas mendocina).